Consider the following 136-residue polypeptide: Mini-ribonuclease 3 (136 aa).

Asp20 is an active-site residue.

It belongs to the MrnC RNase family. Homodimer. Requires Mg(2+) as cofactor.

It localises to the cytoplasm. Functionally, involved in correct processing of both the 5' and 3' ends of 23S rRNA precursor. Processes 30S rRNA precursor transcript even in absence of ribonuclease 3 (Rnc); Rnc processes 30S rRNA into smaller rRNA precursors. The polypeptide is Mini-ribonuclease 3 (Listeria monocytogenes serovar 1/2a (strain ATCC BAA-679 / EGD-e)).